The sequence spans 1380 residues: DNA-directed RNA polymerase subunit beta (1380 aa).

This sequence belongs to the RNA polymerase beta chain family. In terms of assembly, the RNAP catalytic core consists of 2 alpha, 1 beta, 1 beta' and 1 omega subunit. When a sigma factor is associated with the core the holoenzyme is formed, which can initiate transcription.

It carries out the reaction RNA(n) + a ribonucleoside 5'-triphosphate = RNA(n+1) + diphosphate. In terms of biological role, DNA-dependent RNA polymerase catalyzes the transcription of DNA into RNA using the four ribonucleoside triphosphates as substrates. The protein is DNA-directed RNA polymerase subunit beta of Rhizobium rhizogenes (strain K84 / ATCC BAA-868) (Agrobacterium radiobacter).